The sequence spans 101 residues: NADH-quinone oxidoreductase subunit K (101 aa).

The next 3 membrane-spanning stretches (helical) occupy residues 4–24, 30–50, and 61–81; these read LAHYLVLGAILFAISIVGIFL, IIILMAIELMLLAVNTNFVAF, and IFVFFVLTVAAAEAAIGLAIL.

Belongs to the complex I subunit 4L family. NDH-1 is composed of 14 different subunits. Subunits NuoA, H, J, K, L, M, N constitute the membrane sector of the complex.

It is found in the cell inner membrane. The catalysed reaction is a quinone + NADH + 5 H(+)(in) = a quinol + NAD(+) + 4 H(+)(out). In terms of biological role, NDH-1 shuttles electrons from NADH, via FMN and iron-sulfur (Fe-S) centers, to quinones in the respiratory chain. The immediate electron acceptor for the enzyme in this species is believed to be ubiquinone. Couples the redox reaction to proton translocation (for every two electrons transferred, four hydrogen ions are translocated across the cytoplasmic membrane), and thus conserves the redox energy in a proton gradient. In Paraburkholderia xenovorans (strain LB400), this protein is NADH-quinone oxidoreductase subunit K.